The sequence spans 375 residues: 1-deoxy-D-xylulose 5-phosphate reductoisomerase (375 aa).

Positions 12, 13, 14, 15, 39, and 115 each coordinate NADPH. Position 116 (Lys116) interacts with 1-deoxy-D-xylulose 5-phosphate. Residue Glu117 coordinates NADPH. A Mn(2+)-binding site is contributed by Asp141. The 1-deoxy-D-xylulose 5-phosphate site is built by Ser142, Glu143, Ser163, and His186. Glu143 is a Mn(2+) binding site. Position 192 (Gly192) interacts with NADPH. Ser199, Asn204, Lys205, and Glu208 together coordinate 1-deoxy-D-xylulose 5-phosphate. Glu208 serves as a coordination point for Mn(2+).

The protein belongs to the DXR family. Requires Mg(2+) as cofactor. It depends on Mn(2+) as a cofactor.

It catalyses the reaction 2-C-methyl-D-erythritol 4-phosphate + NADP(+) = 1-deoxy-D-xylulose 5-phosphate + NADPH + H(+). The protein operates within isoprenoid biosynthesis; isopentenyl diphosphate biosynthesis via DXP pathway; isopentenyl diphosphate from 1-deoxy-D-xylulose 5-phosphate: step 1/6. Catalyzes the NADPH-dependent rearrangement and reduction of 1-deoxy-D-xylulose-5-phosphate (DXP) to 2-C-methyl-D-erythritol 4-phosphate (MEP). The sequence is that of 1-deoxy-D-xylulose 5-phosphate reductoisomerase from Thermotoga neapolitana (strain ATCC 49049 / DSM 4359 / NBRC 107923 / NS-E).